The primary structure comprises 273 residues: SUMO-1 cysteine protease S273R (273 aa).

Catalysis depends on residues His168 and Asn187. Gln226 provides a ligand contact to substrate. The Nucleophile role is filled by Cys232.

The protein belongs to the peptidase C63 family.

The protein resides in the host cytoplasm. Its subcellular location is the virion. In terms of biological role, cysteine protease that plays several role during infection including processing of the structural polyprotein or inhibition of the host immune response. Catalyzes the maturation of the pp220 and pp62 polyprotein precursors into core-shell proteins. Plays a role in the disruption of host pyroptosis via specific cleavage of gasdermin D/GSDMD. In addition, strongly decreases the host cGAS-STING signaling by targeting IKBKE via its enzymatic activity. Also impairs host FOXJ1-mediated antiviral effect via degradation of FOXJ1. This is SUMO-1 cysteine protease S273R from Ornithodoros (relapsing fever ticks).